We begin with the raw amino-acid sequence, 173 residues long: Large ribosomal subunit protein uL16 (173 aa).

It belongs to the universal ribosomal protein uL16 family.

The protein is Large ribosomal subunit protein uL16 of Methanosphaerula palustris (strain ATCC BAA-1556 / DSM 19958 / E1-9c).